The chain runs to 383 residues: Acetylornithine deacetylase (383 aa).

His80 serves as a coordination point for Zn(2+). Residue Asp82 is part of the active site. Asp112 is a binding site for Zn(2+). Glu144 is a catalytic residue. Zn(2+)-binding residues include Glu145, Glu169, and His355.

It belongs to the peptidase M20A family. ArgE subfamily. In terms of assembly, homodimer. Zn(2+) serves as cofactor. Requires Co(2+) as cofactor. It depends on glutathione as a cofactor.

Its subcellular location is the cytoplasm. It catalyses the reaction N(2)-acetyl-L-ornithine + H2O = L-ornithine + acetate. It participates in amino-acid biosynthesis; L-arginine biosynthesis; L-ornithine from N(2)-acetyl-L-ornithine (linear): step 1/1. In terms of biological role, catalyzes the hydrolysis of the amide bond of N(2)-acetylated L-amino acids. Cleaves the acetyl group from N-acetyl-L-ornithine to form L-ornithine, an intermediate in L-arginine biosynthesis pathway, and a branchpoint in the synthesis of polyamines. The polypeptide is Acetylornithine deacetylase (Shigella sonnei (strain Ss046)).